The primary structure comprises 228 residues: Octanoyltransferase (228 aa).

The BPL/LPL catalytic domain maps to Gly-31 to Phe-212. Residues Arg-76–His-83, Ala-143–Gly-145, and Gly-156–Ala-158 contribute to the substrate site. The Acyl-thioester intermediate role is filled by Cys-174.

Belongs to the LipB family.

It is found in the cytoplasm. The enzyme catalyses octanoyl-[ACP] + L-lysyl-[protein] = N(6)-octanoyl-L-lysyl-[protein] + holo-[ACP] + H(+). Its pathway is protein modification; protein lipoylation via endogenous pathway; protein N(6)-(lipoyl)lysine from octanoyl-[acyl-carrier-protein]: step 1/2. Functionally, catalyzes the transfer of endogenously produced octanoic acid from octanoyl-acyl-carrier-protein onto the lipoyl domains of lipoate-dependent enzymes. Lipoyl-ACP can also act as a substrate although octanoyl-ACP is likely to be the physiological substrate. The sequence is that of Octanoyltransferase from Thermoanaerobacter pseudethanolicus (strain ATCC 33223 / 39E) (Clostridium thermohydrosulfuricum).